We begin with the raw amino-acid sequence, 565 residues long: CTP synthase (565 aa).

The amidoligase domain stretch occupies residues 1–272; it reads MARPKNVKHI…DLRVMKKLGL (272 aa). CTP is bound at residue S18. Position 18 (S18) interacts with UTP. 19 to 24 provides a ligand contact to ATP; the sequence is SLGKGI. Y59 is an L-glutamine binding site. D76 contributes to the ATP binding site. Mg(2+) is bound by residues D76 and E146. Residues 153 to 155, 193 to 198, and K229 each bind CTP; these read DIE and KTKPTQ. Residues 193–198 and K229 contribute to the UTP site; that span reads KTKPTQ. In terms of domain architecture, Glutamine amidotransferase type-1 spans 299 to 543; it reads TIGVCGKYTE…VAAAKEYEKG (245 aa). Residue G363 participates in L-glutamine binding. C390 serves as the catalytic Nucleophile; for glutamine hydrolysis. Residues 391 to 394, E414, and R471 each bind L-glutamine; that span reads LGMQ. Catalysis depends on residues H516 and E518.

The protein belongs to the CTP synthase family. In terms of assembly, homotetramer.

The catalysed reaction is UTP + L-glutamine + ATP + H2O = CTP + L-glutamate + ADP + phosphate + 2 H(+). It carries out the reaction L-glutamine + H2O = L-glutamate + NH4(+). It catalyses the reaction UTP + NH4(+) + ATP = CTP + ADP + phosphate + 2 H(+). It participates in pyrimidine metabolism; CTP biosynthesis via de novo pathway; CTP from UDP: step 2/2. With respect to regulation, allosterically activated by GTP, when glutamine is the substrate; GTP has no effect on the reaction when ammonia is the substrate. The allosteric effector GTP functions by stabilizing the protein conformation that binds the tetrahedral intermediate(s) formed during glutamine hydrolysis. Inhibited by the product CTP, via allosteric rather than competitive inhibition. Functionally, catalyzes the ATP-dependent amination of UTP to CTP with either L-glutamine or ammonia as the source of nitrogen. Regulates intracellular CTP levels through interactions with the four ribonucleotide triphosphates. This is CTP synthase from Chlorobium phaeobacteroides (strain DSM 266 / SMG 266 / 2430).